We begin with the raw amino-acid sequence, 90 residues long: Small ribosomal subunit protein bS16 (90 aa).

It belongs to the bacterial ribosomal protein bS16 family.

The polypeptide is Small ribosomal subunit protein bS16 (Streptococcus equi subsp. zooepidemicus (strain H70)).